Consider the following 318-residue polypeptide: V-set and immunoglobulin domain-containing protein 1 (318 aa).

An N-terminal signal peptide occupies residues 1–19 (MSFLLFITLGLSLTALSHC). The Ig-like V-type domain occupies 20 to 131 (VQVTIQNPII…SSGQGKILLT (112 aa)). Over 20–233 (VQVTIQNPII…TGGEGGVIAA (214 aa)) the chain is Extracellular. 2 cysteine pairs are disulfide-bonded: Cys41/Cys114 and Cys157/Cys207. One can recognise an Ig-like C2-type domain in the interval 136 to 223 (PSVPHCSIRG…GNATCELNLH (88 aa)). The helical transmembrane segment at 234–254 (AVIGGLLAAAIIIAIVWFLVV) threads the bilayer. Over 255–318 (KRKQKKQLPP…ANGETEEPTA (64 aa)) the chain is Cytoplasmic. The disordered stretch occupies residues 261–318 (QLPPTKEMKTGGNQYMAVSGEANEPPKENLGASEPTETIQFHDHAENAANGETEEPTA).

As to expression, expressed in thymocytes.

It localises to the membrane. In Xenopus laevis (African clawed frog), this protein is V-set and immunoglobulin domain-containing protein 1 (vsig1).